We begin with the raw amino-acid sequence, 467 residues long: Sialic acid-binding Ig-like lectin 12 (467 aa).

Positions 1–18 (MLLLLLLLLLWGIKGVEG) are cleaved as a signal peptide. The Extracellular segment spans residues 19-353 (QNPQEVFTLN…ATLSEMMMGT (335 aa)). Positions 21 to 141 (PQEVFTLNVE…TKYNYMWDKM (121 aa)) constitute an Ig-like V-type domain. 3 disulfides stabilise this stretch: Cys-40/Cys-176, Cys-45/Cys-108, and Cys-170/Cys-219. An N-linked (GlcNAc...) asparagine glycan is attached at Asn-46. Arg-126 is a binding site for N-acetylneuraminate. 2 Ig-like C2-type domains span residues 152–239 (PQIL…LNVS) and 242–339 (PKNL…LSLS). Residues Asn-167, Asn-197, Asn-216, Asn-227, Asn-237, Asn-244, Asn-262, Asn-287, and Asn-294 are each glycosylated (N-linked (GlcNAc...) asparagine). A disulfide bridge links Cys-278 with Cys-323. Residues 354–374 (FVGSGVTALLFLSVCILLLAV) form a helical membrane-spanning segment. At 375-467 (RSYRRKPARP…IKFPQRTAWP (93 aa)) the chain is on the cytoplasmic side. Residues 430–435 (IHYATL) carry the ITIM motif motif. Tyr-432 and Tyr-455 each carry phosphotyrosine. The short motif at 453-458 (TEYSEI) is the SLAM-like motif element.

Belongs to the immunoglobulin superfamily. SIGLEC (sialic acid binding Ig-like lectin) family. As to quaternary structure, homodimer; disulfide-linked. Interacts with PTPN6/SHP-1 and PTPN11/SHP-2 upon phosphorylation. In terms of processing, phosphorylation of Tyr-432 is required for binding to PTPN6 and PTPN11. Phosphorylation of Tyr-455 is involved in binding to PTPN6. Tyr-432 needs to be phosphorylated prior to Tyr-455. As to expression, expressed by monocytic/myeloid lineage cells. Found at higher levels in spleen, liver and heart. Found at lower levels in kidney and lung.

It localises to the membrane. Its function is as follows. Putative adhesion molecule that mediates sialic-acid dependent binding to cells. The sialic acid recognition site may be masked by cis interactions with sialic acids on the same cell surface. In the immune response, may act as an inhibitory receptor upon ligand induced tyrosine phosphorylation by recruiting cytoplasmic phosphatase(s) via their SH2 domain(s) that block signal transduction through dephosphorylation of signaling molecules. The protein is Sialic acid-binding Ig-like lectin 12 (Siglec12) of Mus musculus (Mouse).